We begin with the raw amino-acid sequence, 349 residues long: Beta-hexosaminidase (349 aa).

Residues aspartate 64, arginine 72, arginine 138, and 168–169 (KH) contribute to the substrate site. The active-site Proton donor/acceptor is the histidine 181. The Nucleophile role is filled by aspartate 252.

Belongs to the glycosyl hydrolase 3 family. NagZ subfamily.

The protein resides in the cytoplasm. It catalyses the reaction Hydrolysis of terminal non-reducing N-acetyl-D-hexosamine residues in N-acetyl-beta-D-hexosaminides.. It participates in cell wall biogenesis; peptidoglycan recycling. Its function is as follows. Plays a role in peptidoglycan recycling by cleaving the terminal beta-1,4-linked N-acetylglucosamine (GlcNAc) from peptide-linked peptidoglycan fragments, giving rise to free GlcNAc, anhydro-N-acetylmuramic acid and anhydro-N-acetylmuramic acid-linked peptides. The protein is Beta-hexosaminidase of Methylobacillus flagellatus (strain ATCC 51484 / DSM 6875 / VKM B-1610 / KT).